The sequence spans 238 residues: Small proline-rich protein 3 (238 aa).

The disordered stretch occupies residues 1–67 (MSSYQQKQPF…CSTKVPEPGN (67 aa)). Residue Ser-2 is modified to N-acetylserine. Repeat copies occupy residues 52 to 59 (TKIPEPCS), 60 to 67 (TKVPEPGN), 68 to 75 (TVVLEPDY), 76 to 83 (TTMPGPCS), 84 to 91 (TNITEPDY), 92 to 99 (TTIPGPCS), 100 to 107 (TNITEPDY), 108 to 115 (TTIPGPCS), 116 to 123 (TNIPGPDR), 124 to 131 (TVVPGSCS), 132 to 139 (TNITEPDY), 140 to 147 (TTIPGPSS), 148 to 155 (TKIPDPGC), 156 to 163 (AMVPGPSP), 164 to 175 (SSTSEPSSEPCS), 176 to 183 (INVREPGY), 184 to 191 (MNASEPTH), 192 to 199 (AKVPDQGY), 200 to 207 (TKIPDQGS), 208 to 215 (SKVPEPCQ), and 216 to 223 (SRVPEVCP). The 21 X 8 AA approximate tandem repeats stretch occupies residues 52–223 (TKIPEPCSTK…CQSRVPEVCP (172 aa)). The tract at residues 110 to 238 (IPGPCSTNIP…VSAKQKTKQK (129 aa)) is disordered. Residues 163–175 (PSSTSEPSSEPCS) show a composition bias toward low complexity.

This sequence belongs to the cornifin (SPRR) family.

The protein resides in the cytoplasm. Functionally, cross-linked envelope protein of keratinocytes. The chain is Small proline-rich protein 3 (Sprr3) from Mus musculus (Mouse).